A 247-amino-acid polypeptide reads, in one-letter code: 3-deoxy-manno-octulosonate cytidylyltransferase (247 aa).

Belongs to the KdsB family.

The protein localises to the cytoplasm. The catalysed reaction is 3-deoxy-alpha-D-manno-oct-2-ulosonate + CTP = CMP-3-deoxy-beta-D-manno-octulosonate + diphosphate. The protein operates within nucleotide-sugar biosynthesis; CMP-3-deoxy-D-manno-octulosonate biosynthesis; CMP-3-deoxy-D-manno-octulosonate from 3-deoxy-D-manno-octulosonate and CTP: step 1/1. It functions in the pathway bacterial outer membrane biogenesis; lipopolysaccharide biosynthesis. Its function is as follows. Activates KDO (a required 8-carbon sugar) for incorporation into bacterial lipopolysaccharide in Gram-negative bacteria. The chain is 3-deoxy-manno-octulosonate cytidylyltransferase from Methylorubrum populi (strain ATCC BAA-705 / NCIMB 13946 / BJ001) (Methylobacterium populi).